Here is a 200-residue protein sequence, read N- to C-terminus: Ras-related protein Rab-10 (200 aa).

GTP contacts are provided by Ser-18, Gly-19, Val-20, Gly-21, Lys-22, Thr-23, Cys-24, Asn-35, Thr-36, Ser-40, and Thr-41. Thr-23 lines the Mg(2+) pocket. 2 consecutive short sequence motifs (switch) follow at residues 32-46 (DAFNTTFISTIGIDF) and 64-81 (DTAGQERFHTITTSYYRG). 2 residues coordinate Mg(2+): Thr-41 and Asp-64. Gly-67 provides a ligand contact to GTP. Thr-73 bears the Phosphothreonine; by LRRK2 mark. An N6-acetyllysine modification is found at Lys-102. Residue Lys-102 forms a Glycyl lysine isopeptide (Lys-Gly) (interchain with G-Cter in ubiquitin) linkage. Residues Asn-122, Lys-123, Asp-125, and Met-126 each contribute to the GTP site. Residue Lys-136 forms a Glycyl lysine isopeptide (Lys-Gly) (interchain with G-Cter in ubiquitin) linkage. 3 residues coordinate GTP: Ser-152, Ala-153, and Lys-154. Lys-154 is covalently cross-linked (Glycyl lysine isopeptide (Lys-Gly) (interchain with G-Cter in ubiquitin)). S-geranylgeranyl cysteine attachment occurs at residues Cys-199 and Cys-200.

Belongs to the small GTPase superfamily. Rab family. In terms of assembly, interacts with MYO5A; mediates the transport to the plasma membrane of SLC2A4/GLUT4 storage vesicles. Interacts with GDI1 and with GDI2; negatively regulates RAB10 association with membranes and activation. Interacts (GDP-bound form) with LLGL1; the interaction is direct and promotes RAB10 association with membranes and activation through competition with the Rab inhibitor GDI1. Interacts with EXOC4; probably associates with the exocyst. Interacts (GTP-bound form) with MICALCL, MICAL1, MICAL3, EHBP1 and EHBP1L1; at least in case of MICAL1 two molecules of RAB10 can bind to one molecule of MICAL1. Interacts with TBC1D13. Interacts with SEC16A. Interacts with CHM and CHML. Interacts with LRRK2; interaction facilitates phosphorylation of Thr-73. Interacts (when phosphorylated on Thr-73) with RILPL1 and RILPL2. Interacts with TBC1D21. Interacts with MARCKS. Mg(2+) serves as cofactor. In terms of processing, ubiquitinated upon Legionella pneumophila infection. Ubiquitination does not lead to proteasomal degradation. Post-translationally, phosphorylation of Thr-73 in the switch II region by LRRK2 prevents the association of dRAB regulatory proteins, including CHM, CHML and RAB GDP dissociation inhibitors GDI1 and GDI2. Phosphorylation of Thr-73 by LRRK2 is stimulated by RAB29 and RAB32. Phosphorylation by LRRK2 is required for localization to stressed lysosomes. As to expression, expressed in the hippocampus. Expressed in neutrophils (at protein level). Expressed in the testis (at protein level).

The protein resides in the cytoplasmic vesicle membrane. Its subcellular location is the golgi apparatus membrane. It is found in the golgi apparatus. The protein localises to the trans-Golgi network membrane. It localises to the endosome membrane. The protein resides in the recycling endosome membrane. Its subcellular location is the cytoplasmic vesicle. It is found in the phagosome membrane. The protein localises to the cytoplasm. It localises to the cytoskeleton. The protein resides in the cilium basal body. Its subcellular location is the endoplasmic reticulum membrane. It is found in the perinuclear region. The protein localises to the lysosome. It carries out the reaction GTP + H2O = GDP + phosphate + H(+). Regulated by guanine nucleotide exchange factors (GEFs) DENND4C and RABIF which promote the exchange of bound GDP for free GTP. Regulated by GTPase activating proteins (GAPs) including TBC1D21 which increase the GTP hydrolysis activity. Inhibited by GDP dissociation inhibitors GDI1 and GDI2 which prevent Rab-GDP dissociation. Functionally, the small GTPases Rab are key regulators of intracellular membrane trafficking, from the formation of transport vesicles to their fusion with membranes. Rabs cycle between an inactive GDP-bound form and an active GTP-bound form that is able to recruit to membranes different set of downstream effectors directly responsible for vesicle formation, movement, tethering and fusion. That Rab is mainly involved in the biosynthetic transport of proteins from the Golgi to the plasma membrane. Regulates, for instance, SLC2A4/GLUT4 glucose transporter-enriched vesicles delivery to the plasma membrane. In parallel, it regulates the transport of TLR4, a toll-like receptor to the plasma membrane and therefore may be important for innate immune response. Also plays a specific role in asymmetric protein transport to the plasma membrane. In neurons, it is involved in axonogenesis through regulation of vesicular membrane trafficking toward the axonal plasma membrane. In epithelial cells, it regulates transport from the Golgi to the basolateral membrane. May play a role in the basolateral recycling pathway and in phagosome maturation. May play a role in endoplasmic reticulum dynamics and morphology controlling tubulation along microtubules and tubules fusion. Together with LRRK2, RAB8A, and RILPL1, it regulates ciliogenesis. When phosphorylated by LRRK2 on Thr-73, binds RILPL1 and inhibits ciliogenesis. Participates in the export of a subset of neosynthesized proteins through a Rab8-Rab10-Rab11-dependent endososomal export route. Targeted to and stabilized on stressed lysosomes through LRRK2 phosphorylation where it promotes the extracellular release of lysosomal content through EHBP1 and EHNP1L1 effector proteins. (Microbial infection) Upon Legionella pneumophila infection promotes endoplasmic reticulum recruitment and bacterial replication. Plays a role in remodeling the Legionella-containing vacuole (LCV) into an endoplasmic reticulum-like vacuole. This chain is Ras-related protein Rab-10, found in Homo sapiens (Human).